The primary structure comprises 351 residues: Minor outer capsid protein P9 (351 aa).

The segment at 246–308 (GVPAALPQPD…KAVPSGNVSA (63 aa)) is disordered. Basic and acidic residues predominate over residues 285 to 297 (MIRKKVETSKDAP).

This sequence belongs to the phytoreovirus minor outer capsid protein P9 family.

It is found in the virion. The protein localises to the host cytoplasm. Its function is as follows. Minor outer capsid protein. This Rice dwarf virus (isolate O) (RDV) protein is Minor outer capsid protein P9.